The sequence spans 383 residues: Probable purine permease 16 (383 aa).

A run of 10 helical transmembrane segments spans residues Ile-30–Leu-50, Trp-72–Leu-92, Val-113–Leu-133, Val-138–Ile-158, Trp-166–Ala-186, Leu-203–Phe-223, Ile-247–Phe-267, Val-297–Val-317, Ser-322–Trp-342, and Gly-346–His-363.

It belongs to the purine permeases (TC 2.A.7.14) family.

Its subcellular location is the membrane. This is Probable purine permease 16 (PUP16) from Arabidopsis thaliana (Mouse-ear cress).